Reading from the N-terminus, the 486-residue chain is Cephamycin export protein CmcT (486 aa).

The next 14 membrane-spanning stretches (helical) occupy residues 24–44 (VLACTAHFLVVFDTSVITVAL), 56–76 (ASLQWVVNSYTLAFAGLLLFG), 88–108 (VFLGGLAVFTLTSLIGGLATS), 121–141 (AGAAVLAPLAVTMLTTSFAEG), 153–173 (AVALVGGASGNLLGGVFTEFL), 178–198 (VLLVNVPIGIPVLFLAARVLA), 210–230 (LDLPGAVLATAGLTLLTLGVS), 241–261 (AVAVPLAGGLLALLAFVVVEA), 284–304 (LAMLLAGASQVPVWFFLTLSM), 317–337 (LGFVPHALVMLVVGLRVVPWL), 345–365 (VLIAAGAAIGALGFWWQSLLT), 369–389 (AYLGGILGPAVLISIGGGLVG), 418–438 (FGGAFGLAVLLTVTGSGTSGS), and 450–470 (FVGIAVFMLAIAVLTPVLPAL).

The protein belongs to the major facilitator superfamily.

Its subcellular location is the cell membrane. In terms of biological role, involved in cephamycin export. The protein is Cephamycin export protein CmcT (cmcT) of Amycolatopsis lactamdurans (Nocardia lactamdurans).